Here is an 863-residue protein sequence, read N- to C-terminus: Adenosylcobalamin biosynthesis bifunctional protein CobDQ (863 aa).

The interval 1–373 (MNLPEHGGNL…LKSRKKTPSI (373 aa)) is putative threonine-phosphate decarboxylase. O-phospho-L-threonine-binding positions include 6–7 (HG), Asn-30, and Asn-159. An N6-(pyridoxal phosphate)lysine modification is found at Lys-214. Residues Arg-323 and Arg-337 each coordinate O-phospho-L-threonine. A cobyric acid synthase region spans residues 374–863 (MFQGTASNVG…NLIYRKLGLG (490 aa)). Positions 622–810 (RLDVVLIDIP…IHGIFDKDEF (189 aa)) constitute a GATase cobBQ-type domain. Cys-704 serves as the catalytic Nucleophile. The active site involves His-802.

In the N-terminal section; belongs to the class-II pyridoxal-phosphate-dependent aminotransferase family. The protein in the C-terminal section; belongs to the CobB/CobQ family. CobQ subfamily. Pyridoxal 5'-phosphate serves as cofactor.

The enzyme catalyses O-phospho-L-threonine + H(+) = (R)-1-aminopropan-2-yl phosphate + CO2. Its pathway is cofactor biosynthesis; adenosylcobalamin biosynthesis. Its function is as follows. Catalyzes two activities which are involved in the adenosylcobalamin biosynthesis: decarboxylates L-threonine-O-3-phosphate to yield (R)-1-amino-2-propanol O-2-phosphate, the precursor for the linkage between the nucleotide loop and the corrin ring in cobalamin, and catalyzes amidations at positions B, D, E, and G on adenosylcobyrinic A,C-diamide. NH(2) groups are provided by glutamine, and one molecule of ATP is hydrogenolyzed for each amidation. This chain is Adenosylcobalamin biosynthesis bifunctional protein CobDQ (cobDQ), found in Leptospira interrogans serogroup Icterohaemorrhagiae serovar Lai (strain 56601).